Reading from the N-terminus, the 525-residue chain is GMP synthase [glutamine-hydrolyzing] (525 aa).

The 199-residue stretch at 9 to 207 (RILILDFGSQ…VRDICQCEAL (199 aa)) folds into the Glutamine amidotransferase type-1 domain. Cys-86 functions as the Nucleophile in the catalytic mechanism. Active-site residues include His-181 and Glu-183. In terms of domain architecture, GMPS ATP-PPase spans 208–400 (WTPAKIIDDA…LGLPYDMLYR (193 aa)). 235–241 (SGGVDSS) is an ATP binding site.

Homodimer.

The catalysed reaction is XMP + L-glutamine + ATP + H2O = GMP + L-glutamate + AMP + diphosphate + 2 H(+). It participates in purine metabolism; GMP biosynthesis; GMP from XMP (L-Gln route): step 1/1. Functionally, catalyzes the synthesis of GMP from XMP. This chain is GMP synthase [glutamine-hydrolyzing], found in Salmonella arizonae (strain ATCC BAA-731 / CDC346-86 / RSK2980).